Here is a 337-residue protein sequence, read N- to C-terminus: Transaldolase (337 aa).

The short motif at 1–10 (MSSSPVKRQR) is the Nuclear localization signal element. Residue K115 is modified to N6-acetyllysine. K142 functions as the Schiff-base intermediate with substrate in the catalytic mechanism. N6-acetyllysine is present on K219. Residues S237 and S256 each carry the phosphoserine modification. 3 positions are modified to N6-acetyllysine: K269, K286, and K321.

It belongs to the transaldolase family. Type 1 subfamily. As to quaternary structure, homodimer. Heterodimer with isoform 2. Interacts with KPNA1 and KPNA4.

The protein resides in the nucleus. Its subcellular location is the cytoplasm. The enzyme catalyses D-sedoheptulose 7-phosphate + D-glyceraldehyde 3-phosphate = D-erythrose 4-phosphate + beta-D-fructose 6-phosphate. The protein operates within carbohydrate degradation; pentose phosphate pathway; D-glyceraldehyde 3-phosphate and beta-D-fructose 6-phosphate from D-ribose 5-phosphate and D-xylulose 5-phosphate (non-oxidative stage): step 2/3. Its function is as follows. Catalyzes the rate-limiting step of the non-oxidative phase in the pentose phosphate pathway. Catalyzes the reversible conversion of sedheptulose-7-phosphate and D-glyceraldehyde 3-phosphate into erythrose-4-phosphate and beta-D-fructose 6-phosphate. Not only acts as a pentose phosphate pathway enzyme, but also affects other metabolite pathways by altering its subcellular localization between the nucleus and the cytoplasm. The protein is Transaldolase of Homo sapiens (Human).